A 751-amino-acid chain; its full sequence is Pyridoxal-dependent decarboxylase domain-containing protein 1 (751 aa).

The tract at residues 659 to 751 is disordered; it reads QMRKEDSPDS…QEAESVETIR (93 aa). The segment covering 690-702 has biased composition (polar residues); that stretch reads DSISETSSVSQLE. The segment covering 720-729 has biased composition (basic and acidic residues); the sequence is PQERPAHILE. Over residues 742 to 751 the composition is skewed to acidic residues; it reads QEAESVETIR.

The protein belongs to the group II decarboxylase family. Pyridoxal 5'-phosphate serves as cofactor.

The polypeptide is Pyridoxal-dependent decarboxylase domain-containing protein 1 (pdxdc1) (Danio rerio (Zebrafish)).